Reading from the N-terminus, the 220-residue chain is MVRMNEVFDCADPDQRARGIASAVAALKGGRLVVMPTDTVYGIGADAFDRAAVAALLSAKGRGRDMPVGVLVGSWHTIEGLVYTMPDGARELIRAFWPGALSLVVVHAPSLNWDLGDAHGTVMLRMPLHSVAIELLCEVGPMAVSSANVSGQPAAVDVDGARGQLGELVGVYLDAGPSAQQAASTIVDLTEATPRILRAGPVSVARIAEVLGVVPASLIA.

One can recognise a YrdC-like domain in the interval 17-202; the sequence is ARGIASAVAA…TPRILRAGPV (186 aa).

It belongs to the SUA5 family.

The protein resides in the cytoplasm. It carries out the reaction L-threonine + hydrogencarbonate + ATP = L-threonylcarbamoyladenylate + diphosphate + H2O. Its function is as follows. Required for the formation of a threonylcarbamoyl group on adenosine at position 37 (t(6)A37) in tRNAs that read codons beginning with adenine. Catalyzes the conversion of L-threonine, HCO(3)(-)/CO(2) and ATP to give threonylcarbamoyl-AMP (TC-AMP) as the acyladenylate intermediate, with the release of diphosphate. In Mycobacterium leprae (strain TN), this protein is Putative threonylcarbamoyl-AMP synthase.